Consider the following 416-residue polypeptide: Enterobactin exporter EntS (416 aa).

Over methionine 1–alanine 21 the chain is Cytoplasmic. The chain crosses the membrane as a helical span at residues valine 22 to valine 42. Residues glutamine 43–glycine 55 are Periplasmic-facing. A helical transmembrane segment spans residues leucine 56 to alanine 76. Over aspartate 77–lysine 83 the chain is Cytoplasmic. Residues valine 84 to leucine 104 form a helical membrane-spanning segment. At leucine 105 to serine 109 the chain is on the periplasmic side. Residues leucine 110 to alanine 130 form a helical membrane-spanning segment. Residues leucine 131 to arginine 156 lie on the Cytoplasmic side of the membrane. The chain crosses the membrane as a helical span at residues leucine 157–tryptophan 177. Position 178 (asparagine 178) is a topological domain, periplasmic. The helical transmembrane segment at tyrosine 179–leucine 199 threads the bilayer. Residues proline 200–arginine 218 lie on the Cytoplasmic side of the membrane. Residues phenylalanine 219–alanine 239 form a helical membrane-spanning segment. The Periplasmic segment spans residues serine 240–serine 256. The helical transmembrane segment at alanine 257–threonine 277 threads the bilayer. The Cytoplasmic portion of the chain corresponds to serine 278–proline 287. A helical transmembrane segment spans residues glycine 288–leucine 307. Residues methionine 308–leucine 313 are Periplasmic-facing. Residues glycine 314–leucine 336 form a helical membrane-spanning segment. The Cytoplasmic segment spans residues glutamine 337 to asparagine 356. A helical membrane pass occupies residues valine 357 to valine 377. A topological domain (periplasmic) is located at residue alanine 378. The chain crosses the membrane as a helical span at residues serine 379 to valine 399. The Cytoplasmic segment spans residues glutamate 400–serine 416.

Belongs to the major facilitator superfamily. EntS (TC 2.A.1.38) family.

The protein localises to the cell inner membrane. Its function is as follows. Component of an export pathway for enterobactin. The polypeptide is Enterobactin exporter EntS (Escherichia coli O81 (strain ED1a)).